A 690-amino-acid polypeptide reads, in one-letter code: Elongation factor G (690 aa).

The region spanning 8-283 is the tr-type G domain; it reads EDYRNFGIMA…AVVAYLPSPL (276 aa). GTP-binding positions include 17–24, 81–85, and 135–138; these read AHIDAGKT, DTPGH, and NKMD.

Belongs to the TRAFAC class translation factor GTPase superfamily. Classic translation factor GTPase family. EF-G/EF-2 subfamily.

The protein localises to the cytoplasm. Functionally, catalyzes the GTP-dependent ribosomal translocation step during translation elongation. During this step, the ribosome changes from the pre-translocational (PRE) to the post-translocational (POST) state as the newly formed A-site-bound peptidyl-tRNA and P-site-bound deacylated tRNA move to the P and E sites, respectively. Catalyzes the coordinated movement of the two tRNA molecules, the mRNA and conformational changes in the ribosome. The chain is Elongation factor G from Nitrobacter winogradskyi (strain ATCC 25391 / DSM 10237 / CIP 104748 / NCIMB 11846 / Nb-255).